The chain runs to 513 residues: MGSSEEQSVPGDDFYEESGDLNTGLSLVLRPAKSNEGESSLSSPKGSKLTLVSQLEASENPSVVLWAGEYCPDSLVPEEERVGSPMDEKVVGLDFLSQPSVETTATGQQVTNLETKGAREHPSPESVCAETEAGSIRRAPQASEEAKFAASAGTFFPKGLEQSRSWVTPRKSTTSRMVIGENVHHPTSEPEPLDELNEVQMMRVTICLKDGNHGNQAKNSGPAETGDLARHSNVQTRDSFMRMPSSLLVSTTRGLTSGVERQASKEPEPFSSKKKQGTLWGKGGSKSSYPEAAAGIGALPKASPRKKMAQKKKPLWDASAVTLGRAFHQWGQRLKSAPAEPATFPPISGVGLPGRSNKCSLLPLRPKQCKNLYTGKRSGAKKTKELQLVAKEDTDSTRDPSSQVQFPTHRAEPPCQSVHQEFNSGDINARSLQDAGNSQSSALNQRGIMSKKSVLSGDQEEPVGLPAPDSEILQLPGTQGCPRCPELQKEIEDLRKQLSALQAVSEKFQTHLS.

Residues Met1–Lys48 form a disordered region. Residues Gly37–Lys48 show a composition bias toward polar residues. Ser43, Ser84, and Ser123 each carry phosphoserine. Disordered stretches follow at residues Asp210–Ala229, Thr236–Ser287, Ala390–Pro414, and Ser453–Cys481.

This is an uncharacterized protein from Mus musculus (Mouse).